The following is an 811-amino-acid chain: E3 ubiquitin-protein ligase RNF10 (811 aa).

Residues 1–10 show a composition bias toward polar residues; that stretch reads MPLSSPNAAA. The disordered stretch occupies residues 1–119; it reads MPLSSPNAAA…SFNGGRRDEV (119 aa). The residue at position 5 (serine 5) is a Phosphoserine. Low complexity-rich tracts occupy residues 18-31, 78-90, and 104-113; these read NSGS…SGSS, NNQS…QKSK, and SKLFSSSFNG. The tract at residues 101 to 185 is interaction with MEOX2; it reads GGSSKLFSSS…FNKELFLQAN (85 aa). Phosphoserine is present on residues serine 110 and serine 128. The RING-type zinc-finger motif lies at 225–267; sequence CPICLYPPTAAKITRCGHIFCWACILHYLSLSEKTWSKCPICY. Residues 653–662 show a composition bias toward polar residues; that stretch reads DSALGPTSTE. 3 disordered regions span residues 653–672, 724–761, and 776–811; these read DSAL…ISPL, DVWP…VPSF, and LDTP…VHTK. Positions 724-736 are enriched in basic and acidic residues; sequence DVWPKTAPKKDEN. Polar residues predominate over residues 802 to 811; sequence LFSTSVVHTK.

The protein belongs to the RNF10 family. Interacts with MEOX2.

It is found in the cytoplasm. Its subcellular location is the nucleus. The catalysed reaction is S-ubiquitinyl-[E2 ubiquitin-conjugating enzyme]-L-cysteine + [acceptor protein]-L-lysine = [E2 ubiquitin-conjugating enzyme]-L-cysteine + N(6)-ubiquitinyl-[acceptor protein]-L-lysine.. Its pathway is protein modification; protein ubiquitination. In terms of biological role, E3 ubiquitin-protein ligase that catalyzes monoubiquitination of 40S ribosomal proteins RPS2/us5 and RPS3/us3 in response to ribosome stalling. Part of a ribosome quality control that takes place when ribosomes have stalled during translation initiation (iRQC): RNF10 acts by mediating monoubiquitination of RPS2/us5 and RPS3/us3, promoting their degradation by the proteasome. Also promotes ubiquitination of 40S ribosomal proteins in response to ribosome stalling during translation elongation. The action of RNF10 in iRQC is counteracted by USP10. May also act as a transcriptional factor involved in the regulation of MAG (Myelin-associated glycoprotein) expression. Acts as a regulator of Schwann cell differentiation and myelination. This Homo sapiens (Human) protein is E3 ubiquitin-protein ligase RNF10.